The sequence spans 375 residues: 23S rRNA (uracil(747)-C(5))-methyltransferase RlmC (375 aa).

[4Fe-4S] cluster-binding residues include cysteine 3, cysteine 11, cysteine 14, and cysteine 87. S-adenosyl-L-methionine-binding residues include glutamine 212, phenylalanine 241, glutamate 262, and asparagine 307. Residue cysteine 334 is the Nucleophile of the active site.

The protein belongs to the class I-like SAM-binding methyltransferase superfamily. RNA M5U methyltransferase family. RlmC subfamily.

It carries out the reaction uridine(747) in 23S rRNA + S-adenosyl-L-methionine = 5-methyluridine(747) in 23S rRNA + S-adenosyl-L-homocysteine + H(+). Catalyzes the formation of 5-methyl-uridine at position 747 (m5U747) in 23S rRNA. The polypeptide is 23S rRNA (uracil(747)-C(5))-methyltransferase RlmC (Escherichia coli O17:K52:H18 (strain UMN026 / ExPEC)).